Here is a 185-residue protein sequence, read N- to C-terminus: MLGGELLKYKSSKESHILINENINFPCVRVVDVTGKQLGILDTRQAVEYAKNQGVDLVLVNEISDPPVCKLIDYGKHKFIVEKRVKEGRKKQSGALVKEVKMTYKINEHDYETRLNQAFKFLKSGNKVKVTLTFKGREIQHLSLGTMLLNRLMTDLQQIAEVKRSPYQDGKTMILILTPKIVDPQ.

This sequence belongs to the IF-3 family. As to quaternary structure, monomer.

It localises to the plastid. It is found in the chloroplast. IF-3 binds to the 30S ribosomal subunit and shifts the equilibrium between 70S ribosomes and their 50S and 30S subunits in favor of the free subunits, thus enhancing the availability of 30S subunits on which protein synthesis initiation begins. The polypeptide is Translation initiation factor IF-3, chloroplastic (Cyanidium caldarium (Red alga)).